The chain runs to 120 residues: Ribosome-binding factor A (120 aa).

It belongs to the RbfA family. Monomer. Binds 30S ribosomal subunits, but not 50S ribosomal subunits or 70S ribosomes.

The protein resides in the cytoplasm. Functionally, one of several proteins that assist in the late maturation steps of the functional core of the 30S ribosomal subunit. Associates with free 30S ribosomal subunits (but not with 30S subunits that are part of 70S ribosomes or polysomes). Required for efficient processing of 16S rRNA. May interact with the 5'-terminal helix region of 16S rRNA. This chain is Ribosome-binding factor A, found in Dictyoglomus thermophilum (strain ATCC 35947 / DSM 3960 / H-6-12).